The chain runs to 343 residues: Methionine import ATP-binding protein MetN (343 aa).

The ABC transporter domain occupies 2 to 241; the sequence is IKLSNITKVF…PKTPLAQKFI (240 aa). Residue 38-45 coordinates ATP; that stretch reads GASGAGKS.

Belongs to the ABC transporter superfamily. Methionine importer (TC 3.A.1.24) family. The complex is composed of two ATP-binding proteins (MetN), two transmembrane proteins (MetI) and a solute-binding protein (MetQ).

It is found in the cell inner membrane. The enzyme catalyses L-methionine(out) + ATP + H2O = L-methionine(in) + ADP + phosphate + H(+). The catalysed reaction is D-methionine(out) + ATP + H2O = D-methionine(in) + ADP + phosphate + H(+). Part of the ABC transporter complex MetNIQ involved in methionine import. Responsible for energy coupling to the transport system. The polypeptide is Methionine import ATP-binding protein MetN (Escherichia coli O6:K15:H31 (strain 536 / UPEC)).